Consider the following 185-residue polypeptide: Ribosome-recycling factor (185 aa).

It belongs to the RRF family.

Its subcellular location is the cytoplasm. Functionally, responsible for the release of ribosomes from messenger RNA at the termination of protein biosynthesis. May increase the efficiency of translation by recycling ribosomes from one round of translation to another. This chain is Ribosome-recycling factor, found in Aliivibrio salmonicida (strain LFI1238) (Vibrio salmonicida (strain LFI1238)).